A 144-amino-acid polypeptide reads, in one-letter code: Large ribosomal subunit protein bL31c (144 aa).

The N-terminal 48 residues, 1 to 48 (MAVSLPNSFLQISPCVPSLQLRKPVMAAVKGGKQSVRRSSNTVVQITC), are a transit peptide targeting the chloroplast.

Belongs to the bacterial ribosomal protein bL31 family. Type A subfamily. In terms of assembly, part of the 50S ribosomal subunit.

Its subcellular location is the plastid. The protein localises to the chloroplast. Its function is as follows. Binds the 23S rRNA. In Arabidopsis thaliana (Mouse-ear cress), this protein is Large ribosomal subunit protein bL31c (RPL31).